A 299-amino-acid polypeptide reads, in one-letter code: Aliphatic sulfonates import ATP-binding protein SsuB (299 aa).

Residues 36–257 enclose the ABC transporter domain; the sequence is LHVQQVIKRY…QHGSAAFAQI (222 aa). 68 to 75 contacts ATP; the sequence is GRSGCGKS.

This sequence belongs to the ABC transporter superfamily. Aliphatic sulfonates importer (TC 3.A.1.17.2) family. As to quaternary structure, the complex is composed of two ATP-binding proteins (SsuB), two transmembrane proteins (SsuC) and a solute-binding protein (SsuA).

The protein localises to the cell inner membrane. It catalyses the reaction ATP + H2O + aliphatic sulfonate-[sulfonate-binding protein]Side 1 = ADP + phosphate + aliphatic sulfonateSide 2 + [sulfonate-binding protein]Side 1.. Part of the ABC transporter complex SsuABC involved in aliphatic sulfonates import. Responsible for energy coupling to the transport system. The protein is Aliphatic sulfonates import ATP-binding protein SsuB of Cupriavidus pinatubonensis (strain JMP 134 / LMG 1197) (Cupriavidus necator (strain JMP 134)).